The chain runs to 497 residues: Guanosine-5'-triphosphate,3'-diphosphate pyrophosphatase (497 aa).

Belongs to the GppA/Ppx family. GppA subfamily.

The enzyme catalyses guanosine 3'-diphosphate 5'-triphosphate + H2O = guanosine 3',5'-bis(diphosphate) + phosphate + H(+). It participates in purine metabolism; ppGpp biosynthesis; ppGpp from GTP: step 2/2. Catalyzes the conversion of pppGpp to ppGpp. Guanosine pentaphosphate (pppGpp) is a cytoplasmic signaling molecule which together with ppGpp controls the 'stringent response', an adaptive process that allows bacteria to respond to amino acid starvation, resulting in the coordinated regulation of numerous cellular activities. This Vibrio cholerae serotype O1 (strain ATCC 39541 / Classical Ogawa 395 / O395) protein is Guanosine-5'-triphosphate,3'-diphosphate pyrophosphatase.